Consider the following 144-residue polypeptide: Cysteine desulfuration protein SufE (144 aa).

Cysteine 51 acts as the Cysteine persulfide intermediate in catalysis.

Belongs to the SufE family. In terms of assembly, homodimer. Interacts with SufS.

The protein resides in the cytoplasm. It participates in cofactor biosynthesis; iron-sulfur cluster biosynthesis. In terms of biological role, participates in cysteine desulfuration mediated by SufS. Cysteine desulfuration mobilizes sulfur from L-cysteine to yield L-alanine and constitutes an essential step in sulfur metabolism for biosynthesis of a variety of sulfur-containing biomolecules. Functions as a sulfur acceptor for SufS, by mediating the direct transfer of the sulfur atom from the S-sulfanylcysteine of SufS, an intermediate product of cysteine desulfuration process. The sequence is that of Cysteine desulfuration protein SufE from Wigglesworthia glossinidia brevipalpis.